We begin with the raw amino-acid sequence, 321 residues long: tRNA uridine(34) hydroxylase (321 aa).

One can recognise a Rhodanese domain in the interval 135–233; it reads DDPDTLVIDT…YLEQVPEEES (99 aa). Residue cysteine 193 is the Cysteine persulfide intermediate of the active site. The segment at 301–321 is disordered; sequence RQRQMDQLSSASSKKSDDFSL.

Belongs to the TrhO family.

It carries out the reaction uridine(34) in tRNA + AH2 + O2 = 5-hydroxyuridine(34) in tRNA + A + H2O. Its function is as follows. Catalyzes oxygen-dependent 5-hydroxyuridine (ho5U) modification at position 34 in tRNAs. The sequence is that of tRNA uridine(34) hydroxylase from Parasynechococcus marenigrum (strain WH8102).